We begin with the raw amino-acid sequence, 23 residues long: Dermaseptin-4 (23 aa).

A Glutamine amide modification is found at Gln-23.

In terms of tissue distribution, expressed by the skin glands.

The protein localises to the secreted. Antimicrobial peptide, active against the Gram-positive bacterium S.aureus, and the Gram-negative bacteria E.coli and P.aeruginosa. Has hemolytic activity (5% hemolysis at 128 ug/ml). In Phyllomedusa tarsius (Brownbelly leaf frog), this protein is Dermaseptin-4.